Reading from the N-terminus, the 121-residue chain is MDDLTTRLKALSSANEFLEFFGIAYEERVVHVNRLHILKRFYQYLHRAEGLAGLDDVEMFRRYRELLAQAYQDFTTSTAVKEKVFKVFQDADGQGHVSVTSLRDSLAERRKSAGGPELRAA.

This sequence belongs to the NifW family. In terms of assembly, homotrimer; associates with NifD.

May protect the nitrogenase Fe-Mo protein from oxidative damage. This chain is Nitrogenase-stabilizing/protective protein NifW, found in Leptothrix cholodnii (strain ATCC 51168 / LMG 8142 / SP-6) (Leptothrix discophora (strain SP-6)).